Here is a 504-residue protein sequence, read N- to C-terminus: Hexokinase-10 (504 aa).

A helical transmembrane segment spans residues 7–29; sequence GWVRVAAVGWAVAACAVAAGMVA. A Hexokinase domain is found at 39 to 493; the sequence is NRAVAVVRDL…SGTGAALLAA (455 aa). The hexokinase small subdomain stretch occupies residues 94 to 226; sequence DGSEEGISYA…GLNMKVNVLV (133 aa). Glycine 108 and threonine 109 together coordinate ADP. Positions 192, 193, 227, 254, 282, and 313 each coordinate D-glucose. Positions 227–482 are hexokinase large subdomain; the sequence is NNTVGTLALG…ATVSLRVMEE (256 aa). Glycine 447 lines the ADP pocket.

It belongs to the hexokinase family. In terms of tissue distribution, expressed specifically in stamen.

Its subcellular location is the plastid. The protein localises to the chloroplast outer membrane. It catalyses the reaction a D-hexose + ATP = a D-hexose 6-phosphate + ADP + H(+). The catalysed reaction is D-fructose + ATP = D-fructose 6-phosphate + ADP + H(+). It carries out the reaction D-glucose + ATP = D-glucose 6-phosphate + ADP + H(+). It participates in carbohydrate metabolism; hexose metabolism. It functions in the pathway carbohydrate degradation; glycolysis; D-glyceraldehyde 3-phosphate and glycerone phosphate from D-glucose: step 1/4. In terms of biological role, fructose and glucose phosphorylating enzyme. In Oryza sativa subsp. japonica (Rice), this protein is Hexokinase-10 (HXK10).